Consider the following 698-residue polypeptide: DNA ligase (698 aa).

Residues 40–44 (DDVYD), 89–90 (SL), and E123 each bind NAD(+). K125 (N6-AMP-lysine intermediate) is an active-site residue. The NAD(+) site is built by R146, E184, K300, and K324. Residues C417, C420, C435, and C441 each contribute to the Zn(2+) site. Positions 618–698 (SSASPVAGKA…EWLALTGAAD (81 aa)) constitute a BRCT domain.

This sequence belongs to the NAD-dependent DNA ligase family. LigA subfamily. Requires Mg(2+) as cofactor. Mn(2+) serves as cofactor.

The enzyme catalyses NAD(+) + (deoxyribonucleotide)n-3'-hydroxyl + 5'-phospho-(deoxyribonucleotide)m = (deoxyribonucleotide)n+m + AMP + beta-nicotinamide D-nucleotide.. DNA ligase that catalyzes the formation of phosphodiester linkages between 5'-phosphoryl and 3'-hydroxyl groups in double-stranded DNA using NAD as a coenzyme and as the energy source for the reaction. It is essential for DNA replication and repair of damaged DNA. This Paramagnetospirillum magneticum (strain ATCC 700264 / AMB-1) (Magnetospirillum magneticum) protein is DNA ligase.